The following is a 335-amino-acid chain: Nucleotide-binding protein CYA_0911 (335 aa).

20 to 27 (GLTGSGKT) is an ATP binding site. The tract at residues 306–335 (ARFGPPPPAAGVEQQQVRIPLAGVPAPPHD) is disordered.

The protein belongs to the RapZ-like family.

Functionally, displays ATPase and GTPase activities. The protein is Nucleotide-binding protein CYA_0911 of Synechococcus sp. (strain JA-3-3Ab) (Cyanobacteria bacterium Yellowstone A-Prime).